Here is a 222-residue protein sequence, read N- to C-terminus: UPF0128 protein TK2294 (222 aa).

Belongs to the UPF0128 family.

The chain is UPF0128 protein TK2294 from Thermococcus kodakarensis (strain ATCC BAA-918 / JCM 12380 / KOD1) (Pyrococcus kodakaraensis (strain KOD1)).